We begin with the raw amino-acid sequence, 292 residues long: Acetylglutamate kinase (292 aa).

Substrate is bound by residues 64–65 (GG), Arg86, and Asn190.

Belongs to the acetylglutamate kinase family. ArgB subfamily.

The protein localises to the cytoplasm. It catalyses the reaction N-acetyl-L-glutamate + ATP = N-acetyl-L-glutamyl 5-phosphate + ADP. The protein operates within amino-acid biosynthesis; L-arginine biosynthesis; N(2)-acetyl-L-ornithine from L-glutamate: step 2/4. Its function is as follows. Catalyzes the ATP-dependent phosphorylation of N-acetyl-L-glutamate. The protein is Acetylglutamate kinase of Geotalea daltonii (strain DSM 22248 / JCM 15807 / FRC-32) (Geobacter daltonii).